A 158-amino-acid chain; its full sequence is MLQISARFYCKIAKQQISELPKISKPSKLLDFKQLHHPTKVPQTPVPTAFPDATNNSEIEIDAKTIQLLERLSLVDLDSEQALATLKSSIQFADKIEHIDTHNVRPLYTVLEHQQLQLRNDRVAEGDCREQLLRIAKVTDEDYYVSPPGNIPLEQLDK.

The protein belongs to the GatC family. As to quaternary structure, subunit of the heterotrimeric GatCAB amidotransferase (AdT) complex, composed of A, B and C subunits.

The protein resides in the mitochondrion. The catalysed reaction is L-glutamyl-tRNA(Gln) + L-glutamine + ATP + H2O = L-glutaminyl-tRNA(Gln) + L-glutamate + ADP + phosphate + H(+). In terms of biological role, allows the formation of correctly charged Gln-tRNA(Gln) through the transamidation of misacylated Glu-tRNA(Gln) in the mitochondria. The reaction takes place in the presence of glutamine and ATP through an activated gamma-phospho-Glu-tRNA(Gln). In Drosophila grimshawi (Hawaiian fruit fly), this protein is Glutamyl-tRNA(Gln) amidotransferase subunit C, mitochondrial.